Consider the following 351-residue polypeptide: Cysteine-rich receptor-like protein kinase 45 (351 aa).

The Protein kinase domain occupies 37 to 287 (NDFSELVGRG…EILRYIHIAL (251 aa)). Residues 43-51 (VGRGGFGFV) and lysine 65 contribute to the ATP site. The residue at position 110 (tyrosine 110) is a Phosphotyrosine. The active-site Proton acceptor is aspartate 162. Residues threonine 197 and threonine 202 each carry the phosphothreonine modification. Position 210 is a phosphotyrosine (tyrosine 210).

This sequence belongs to the protein kinase superfamily. Ser/Thr protein kinase family. CRK subfamily. In terms of assembly, interacts with CRK36. In terms of processing, autophosphorylated and phosphorylated by CRK36.

The protein resides in the cytoplasm. It is found in the cytosol. It catalyses the reaction L-seryl-[protein] + ATP = O-phospho-L-seryl-[protein] + ADP + H(+). The enzyme catalyses L-threonyl-[protein] + ATP = O-phospho-L-threonyl-[protein] + ADP + H(+). Functionally, forms a complex with CRK36 that may negatively control abscisic acid (ABA) and osmotic stress signal transduction. Involved in plant response to ABA during seed germination, early seedling growth and responses to abiotic stresses by inducing the expression of ABA-responsive genes and stress-inducible genes. Acts as a positive regulator in disease resistance, downstream of NPR1 and WRKY70. This chain is Cysteine-rich receptor-like protein kinase 45, found in Arabidopsis thaliana (Mouse-ear cress).